Reading from the N-terminus, the 294-residue chain is uncharacterized protein (294 aa).

2 disordered regions span residues 1-148 and 268-294; these read MFLR…LEKP and DEAA…GKGL. Phosphoserine occurs at positions 34 and 35. The span at 35 to 44 shows a compositional bias: low complexity; the sequence is SSENSGSDWD. Positions 52–62 are enriched in basic and acidic residues; that stretch reads DVGHPKTKDSG. Phosphoserine occurs at positions 71 and 90. Basic and acidic residues-rich tracts occupy residues 73-92 and 278-294; these read PSKE…DSLK and GLER…GKGL.

This is an uncharacterized protein from Homo sapiens (Human).